Consider the following 163-residue polypeptide: S-fimbrial adhesin protein SfaS (163 aa).

A signal peptide spans 1–22; it reads MKLKAIILATGLINCIAFSAQA. Residues Cys38 and Cys75 are joined by a disulfide bond. Residues 138–144 are involved in sialic acid binding; sequence KARAVSK.

It belongs to the fimbrial protein family.

It localises to the fimbrium. In terms of biological role, fimbriae (also called pili), polar filaments radiating from the surface of the bacterium to a length of 0.5-1.5 micrometers and numbering 100-300 per cell, enable bacteria to colonize the epithelium of specific host organs. A minor fimbrial subunit, this protein is necessary for full expression of S-specific binding. S-fimbrial adhesins enable pathogenic E.coli causing urinary-tract infections or newborn meningitis to attach to glycoproteins terminating with alpha-sialic acid-(2-3)-beta-Gal. This protein binds to the alpha-sialic acid-(2-3)-beta-Gal and is thus responsible for erythrocyte recognition and hemagglutination. The polypeptide is S-fimbrial adhesin protein SfaS (sfaS) (Escherichia coli O6:K15:H31 (strain 536 / UPEC)).